We begin with the raw amino-acid sequence, 237 residues long: 1-(5-phosphoribosyl)-5-[(5-phosphoribosylamino)methylideneamino] imidazole-4-carboxamide isomerase (237 aa).

D8 functions as the Proton acceptor in the catalytic mechanism. The Proton donor role is filled by D129.

The protein belongs to the HisA/HisF family.

The protein localises to the cytoplasm. The enzyme catalyses 1-(5-phospho-beta-D-ribosyl)-5-[(5-phospho-beta-D-ribosylamino)methylideneamino]imidazole-4-carboxamide = 5-[(5-phospho-1-deoxy-D-ribulos-1-ylimino)methylamino]-1-(5-phospho-beta-D-ribosyl)imidazole-4-carboxamide. It functions in the pathway amino-acid biosynthesis; L-histidine biosynthesis; L-histidine from 5-phospho-alpha-D-ribose 1-diphosphate: step 4/9. This Roseiflexus castenholzii (strain DSM 13941 / HLO8) protein is 1-(5-phosphoribosyl)-5-[(5-phosphoribosylamino)methylideneamino] imidazole-4-carboxamide isomerase.